Reading from the N-terminus, the 204-residue chain is NAD(P)H dehydrogenase (quinone) (204 aa).

In terms of domain architecture, Flavodoxin-like spans 3 to 194 (VLIVFYSMYG…AGARYQGRHV (192 aa)). Residues 9–14 (SMYGHI) and 82–84 (TRF) each bind FMN. An NAD(+)-binding site is contributed by Tyr-11. Trp-102 is a binding site for substrate. His-138 lines the FMN pocket.

Belongs to the WrbA family. It depends on FMN as a cofactor.

The enzyme catalyses a quinone + NADH + H(+) = a quinol + NAD(+). The catalysed reaction is a quinone + NADPH + H(+) = a quinol + NADP(+). The chain is NAD(P)H dehydrogenase (quinone) from Syntrophobacter fumaroxidans (strain DSM 10017 / MPOB).